The chain runs to 146 residues: Hut operon positive regulatory protein (146 aa).

This sequence belongs to the HutP family. Homohexamer.

In terms of biological role, antiterminator that binds to cis-acting regulatory sequences on the mRNA in the presence of histidine, thereby suppressing transcription termination and activating the hut operon for histidine utilization. The chain is Hut operon positive regulatory protein from Bacillus cereus (strain G9842).